Reading from the N-terminus, the 503-residue chain is Probable cytosol aminopeptidase (503 aa).

Mn(2+) is bound by residues lysine 270 and aspartate 275. Lysine 282 is a catalytic residue. Residues aspartate 293, aspartate 352, and glutamate 354 each coordinate Mn(2+). Arginine 356 is an active-site residue.

The protein belongs to the peptidase M17 family. It depends on Mn(2+) as a cofactor.

The protein localises to the cytoplasm. The catalysed reaction is Release of an N-terminal amino acid, Xaa-|-Yaa-, in which Xaa is preferably Leu, but may be other amino acids including Pro although not Arg or Lys, and Yaa may be Pro. Amino acid amides and methyl esters are also readily hydrolyzed, but rates on arylamides are exceedingly low.. It catalyses the reaction Release of an N-terminal amino acid, preferentially leucine, but not glutamic or aspartic acids.. Presumably involved in the processing and regular turnover of intracellular proteins. Catalyzes the removal of unsubstituted N-terminal amino acids from various peptides. The polypeptide is Probable cytosol aminopeptidase (Edwardsiella ictaluri (strain 93-146)).